The primary structure comprises 308 residues: Acetylglutamate kinase (308 aa).

Residues 64–65 (GG), Arg86, and Asn192 each bind substrate.

It belongs to the acetylglutamate kinase family. ArgB subfamily.

The protein localises to the cytoplasm. It catalyses the reaction N-acetyl-L-glutamate + ATP = N-acetyl-L-glutamyl 5-phosphate + ADP. It functions in the pathway amino-acid biosynthesis; L-arginine biosynthesis; N(2)-acetyl-L-ornithine from L-glutamate: step 2/4. Catalyzes the ATP-dependent phosphorylation of N-acetyl-L-glutamate. This chain is Acetylglutamate kinase, found in Myxococcus xanthus (strain DK1622).